Reading from the N-terminus, the 115-residue chain is Flagellar transcriptional regulator FlhD (115 aa).

It belongs to the FlhD family. Homodimer; disulfide-linked. Forms a heterohexamer composed of two FlhC and four FlhD subunits. Each FlhC binds a FlhD dimer, forming a heterotrimer, and a hexamer assembles by dimerization of two heterotrimers.

The protein resides in the cytoplasm. Its function is as follows. Functions in complex with FlhC as a master transcriptional regulator that regulates transcription of several flagellar and non-flagellar operons by binding to their promoter region. Activates expression of class 2 flagellar genes, including fliA, which is a flagellum-specific sigma factor that turns on the class 3 genes. Also regulates genes whose products function in a variety of physiological pathways. The protein is Flagellar transcriptional regulator FlhD of Edwardsiella ictaluri (strain 93-146).